Here is a 269-residue protein sequence, read N- to C-terminus: Hydroxyethylthiazole kinase (269 aa).

M45 is a binding site for substrate. ATP-binding residues include R121 and T167. G194 is a binding site for substrate.

This sequence belongs to the Thz kinase family. Mg(2+) serves as cofactor.

It catalyses the reaction 5-(2-hydroxyethyl)-4-methylthiazole + ATP = 4-methyl-5-(2-phosphooxyethyl)-thiazole + ADP + H(+). The protein operates within cofactor biosynthesis; thiamine diphosphate biosynthesis; 4-methyl-5-(2-phosphoethyl)-thiazole from 5-(2-hydroxyethyl)-4-methylthiazole: step 1/1. Catalyzes the phosphorylation of the hydroxyl group of 4-methyl-5-beta-hydroxyethylthiazole (THZ). This is Hydroxyethylthiazole kinase from Brevibacillus brevis (strain 47 / JCM 6285 / NBRC 100599).